Consider the following 162-residue polypeptide: UPF0102 protein Bpet0439 (162 aa).

Positions 15-52 (QAQQRQMKRRRAAAHRAARGPAPARAPRASPTQRTGTA) are disordered. Residues 20–32 (QMKRRRAAAHRAA) are compositionally biased toward basic residues. Low complexity predominate over residues 33–48 (RGPAPARAPRASPTQR).

Belongs to the UPF0102 family.

This chain is UPF0102 protein Bpet0439, found in Bordetella petrii (strain ATCC BAA-461 / DSM 12804 / CCUG 43448).